Here is an 86-residue protein sequence, read N- to C-terminus: Arminin 7246 (86 aa).

Residues 1–18 (MRPEYAVLFLALIALTYA) form the signal peptide. The propeptide occupies 19 to 57 (RSNEDVREEIKNEIEKDILEDLVEDEGELDDKAIDVNDA). The residue at position 83 (Ala83) is an Alanine amide.

It belongs to the arminin family. As to expression, expressed in entodermal epithelium along the body column.

Its subcellular location is the secreted. It is found in the target cell membrane. In terms of biological role, antimicrobial peptide with a broad-spectrum antimicrobial activity. Keeps its antibacterial activity under a wide range of salt concentrations that mimic physiological conditions of human blood, which is surprising, since Hydra is an obligate freshwater animal with nearly no salt tolerance. Does not affect red blood cells. This chain is Arminin 7246, found in Hydra viridissima (Green hydra).